Consider the following 94-residue polypeptide: uncharacterized protein (94 aa).

An N-terminal signal peptide occupies residues 1 to 26 (MNDQRDQAVPWATGLAVAGFVAAVIA). 2 helical membrane-spanning segments follow: residues 42-62 (LLAVGLNIVAVSGLAPTLWGW) and 71-91 (FVLGAAVGVAGAWLALLALTL).

It is found in the cell membrane. This is an uncharacterized protein from Mycobacterium tuberculosis (strain CDC 1551 / Oshkosh).